Here is a 140-residue protein sequence, read N- to C-terminus: Cysteine protease inhibitor 6 (140 aa).

A disulfide bond links Cys103 and Cys109.

Belongs to the protease inhibitor I3 (leguminous Kunitz-type inhibitor) family.

The protein localises to the vacuole. Functionally, inhibitor of cysteine proteases. May protect the plant by inhibiting proteases of invading organisms. The sequence is that of Cysteine protease inhibitor 6 from Solanum tuberosum (Potato).